Here is a 322-residue protein sequence, read N- to C-terminus: Thioredoxin reductase (322 aa).

Residues 11 to 14 (SGPA), 40 to 41 (IA), Q45, N54, V87, and C145 contribute to the FAD site. A disulfide bond links C142 and C145. Position 192 is a phosphoserine (S192). T278 carries the phosphothreonine modification. The residue at position 279 (S279) is a Phosphoserine. FAD is bound by residues D288 and 295-297 (RQA).

The protein belongs to the class-II pyridine nucleotide-disulfide oxidoreductase family. As to quaternary structure, homodimer. Requires FAD as cofactor.

It localises to the cytoplasm. The enzyme catalyses [thioredoxin]-dithiol + NADP(+) = [thioredoxin]-disulfide + NADPH + H(+). The protein is Thioredoxin reductase (trr1) of Schizosaccharomyces pombe (strain 972 / ATCC 24843) (Fission yeast).